The primary structure comprises 439 residues: Protein translocase subunit SecY (439 aa).

Transmembrane regions (helical) follow at residues 19–39, 68–88, 116–136, 151–171, 176–196, 216–236, 269–289, 312–332, 373–393, and 396–416; these read ILFTIFILFVFRLGAHITAPG, YSLFAMGVSPYITASIIVQLL, YITLVLAMAQSIGITAGFQAM, LMIGVLLTTGSMVVTWMGEQI, FGSGVSVIIFAGIVSGIPSAI, WIFVIGLILSAIVIIYVTTFV, VIPVIFAGSITTAPATILQFL, WTGMLFYALLIVLFTFFYSFV, VGSLFLGLISIIPIAAQNVWG, and KIVALGGTSLLILIQVAIQAV.

It belongs to the SecY/SEC61-alpha family. Component of the Sec protein translocase complex. Heterotrimer consisting of SecY, SecE and SecG subunits. The heterotrimers can form oligomers, although 1 heterotrimer is thought to be able to translocate proteins. Interacts with the ribosome. Interacts with SecDF, and other proteins may be involved. Interacts with SecA.

The protein resides in the cell membrane. Its function is as follows. The central subunit of the protein translocation channel SecYEG. Consists of two halves formed by TMs 1-5 and 6-10. These two domains form a lateral gate at the front which open onto the bilayer between TMs 2 and 7, and are clamped together by SecE at the back. The channel is closed by both a pore ring composed of hydrophobic SecY resides and a short helix (helix 2A) on the extracellular side of the membrane which forms a plug. The plug probably moves laterally to allow the channel to open. The ring and the pore may move independently. The sequence is that of Protein translocase subunit SecY from Lactococcus lactis subsp. cremoris (Streptococcus cremoris).